The primary structure comprises 463 residues: Glutamate--tRNA ligase 1 (463 aa).

The 'HIGH' region signature appears at 10–20 (PSPTGYLHIGG). Positions 238 to 242 (KLSKR) match the 'KMSKS' region motif. K241 is a binding site for ATP.

Belongs to the class-I aminoacyl-tRNA synthetase family. Glutamate--tRNA ligase type 1 subfamily. In terms of assembly, monomer.

It localises to the cytoplasm. It catalyses the reaction tRNA(Glu) + L-glutamate + ATP = L-glutamyl-tRNA(Glu) + AMP + diphosphate. Functionally, catalyzes the attachment of glutamate to tRNA(Glu) in a two-step reaction: glutamate is first activated by ATP to form Glu-AMP and then transferred to the acceptor end of tRNA(Glu). This chain is Glutamate--tRNA ligase 1, found in Helicobacter pylori (strain ATCC 700392 / 26695) (Campylobacter pylori).